Reading from the N-terminus, the 400-residue chain is Argininosuccinate synthase (400 aa).

Alanine 8–serine 16 provides a ligand contact to ATP. The L-citrulline site is built by tyrosine 87 and serine 92. Glycine 117 provides a ligand contact to ATP. The L-aspartate site is built by threonine 119, asparagine 123, and aspartate 124. Asparagine 123 is a binding site for L-citrulline. L-citrulline-binding residues include arginine 127, serine 175, glutamate 259, and tyrosine 271.

The protein belongs to the argininosuccinate synthase family. Type 1 subfamily. In terms of assembly, homotetramer.

The protein resides in the cytoplasm. It carries out the reaction L-citrulline + L-aspartate + ATP = 2-(N(omega)-L-arginino)succinate + AMP + diphosphate + H(+). It functions in the pathway amino-acid biosynthesis; L-arginine biosynthesis; L-arginine from L-ornithine and carbamoyl phosphate: step 2/3. The sequence is that of Argininosuccinate synthase from Frankia casuarinae (strain DSM 45818 / CECT 9043 / HFP020203 / CcI3).